The following is a 120-amino-acid chain: Large ribosomal subunit protein uL18 (120 aa).

Belongs to the universal ribosomal protein uL18 family. Part of the 50S ribosomal subunit; part of the 5S rRNA/L5/L18/L25 subcomplex. Contacts the 5S and 23S rRNAs.

This is one of the proteins that bind and probably mediate the attachment of the 5S RNA into the large ribosomal subunit, where it forms part of the central protuberance. This is Large ribosomal subunit protein uL18 from Bacillus pumilus (strain SAFR-032).